We begin with the raw amino-acid sequence, 287 residues long: Proline iminopeptidase (287 aa).

Positions 22–271 (PLVLLHGGPG…RSRHMAFIDE (250 aa)) constitute an AB hydrolase-1 domain. The active-site Nucleophile is the serine 98. Aspartate 238 is an active-site residue. Histidine 265 functions as the Proton donor in the catalytic mechanism.

The protein belongs to the peptidase S33 family.

The protein resides in the cell envelope. The catalysed reaction is Release of N-terminal proline from a peptide.. Releases the N-terminal proline from various substrates. This is Proline iminopeptidase from Lactiplantibacillus plantarum (strain ATCC BAA-793 / NCIMB 8826 / WCFS1) (Lactobacillus plantarum).